Here is a 1396-residue protein sequence, read N- to C-terminus: ABC-type transporter cicA (1396 aa).

A disordered region spans residues 1–40 (MRLSSEAKIAESGGQPPTAGSRSETGSESTEAESADPKAQ). Positions 18–29 (TAGSRSETGSES) are enriched in low complexity. Transmembrane regions (helical) follow at residues 142 to 162 (FLLG…APYL), 191 to 211 (GFVV…NQFL), and 300 to 320 (MFHI…LLLV). The ABC transmembrane type-1 1 domain maps to 143-466 (LLGGFCHLIS…LPLVLGQITD (324 aa)). Asn-321 is a glycosylation site (N-linked (GlcNAc...) asparagine). 3 helical membrane passes run 324-344 (YSAL…TYAV), 409-429 (ILCV…ITYA), and 440-460 (IFSS…LPLV). The span at 510 to 533 (AADKEAEKVEKKANPRRTEPKSEA) shows a compositional bias: basic and acidic residues. The segment at 510–543 (AADKEAEKVEKKANPRRTEPKSEAPTDSAESDEP) is disordered. One can recognise an ABC transporter 1 domain in the interval 525–751 (RRTEPKSEAP…NDLFKQLMST (227 aa)). 563–570 (GTVGSGKS) is a binding site for ATP. Asn-604 carries N-linked (GlcNAc...) asparagine glycosylation. Residues 751-787 (TASQDSKEDEEEATEVVEEEAEKQAQQEPTKPAAALM) form a disordered region. The span at 757–771 (KEDEEEATEVVEEEA) shows a compositional bias: acidic residues. Helical transmembrane passes span 816–836 (LAIL…NLWL) and 852–872 (YIGI…IFST). The 278-residue stretch at 816–1093 (LAILFLLAFA…TVRQLAEVEN (278 aa)) folds into the ABC transmembrane type-1 2 domain. Asn-880 carries an N-linked (GlcNAc...) asparagine glycan. The next 4 helical transmembrane spans lie at 930-947 (MYAI…LIIV), 951-970 (YFAI…SNYY), 1036-1056 (LSVR…VLVV), and 1065-1085 (SISG…QFTV). 3 N-linked (GlcNAc...) asparagine glycosylation sites follow: Asn-1096, Asn-1150, and Asn-1154. In terms of domain architecture, ABC transporter 2 spans 1131–1380 (ITFDNVAMRY…EDGIFRAMCE (250 aa)). Residue 1165–1172 (GRTGAGKS) participates in ATP binding.

Belongs to the ABC transporter superfamily. ABCC family. Conjugate transporter (TC 3.A.1.208) subfamily.

The protein resides in the cell membrane. Functionally, ABC-type transporter; part of the gene cluster that mediates the biosynthesis of cichorine, a phytotoxin active against knapweed, corn, and soybeans. CicA is probably involved in the secretion of cichorine. This is ABC-type transporter cicA from Emericella nidulans (strain FGSC A4 / ATCC 38163 / CBS 112.46 / NRRL 194 / M139) (Aspergillus nidulans).